Consider the following 81-residue polypeptide: MDSITSAASVVAAGLAVGLAAIGPGIGQGTASGGAVEGIARQPEAEGKIRGTLLLSLAFMESLTIYGLVVALVLLFANPFA.

2 helical membrane passes run 7 to 27 (AASV…PGIG) and 57 to 77 (LAFM…LLFA).

This sequence belongs to the ATPase C chain family. In terms of assembly, F-type ATPases have 2 components, F(1) - the catalytic core - and F(0) - the membrane proton channel. F(1) has five subunits: alpha(3), beta(3), gamma(1), delta(1), epsilon(1). F(0) has four main subunits: a(1), b(1), b'(1) and c(10-14). The alpha and beta chains form an alternating ring which encloses part of the gamma chain. F(1) is attached to F(0) by a central stalk formed by the gamma and epsilon chains, while a peripheral stalk is formed by the delta, b and b' chains.

It localises to the cellular thylakoid membrane. In terms of biological role, f(1)F(0) ATP synthase produces ATP from ADP in the presence of a proton or sodium gradient. F-type ATPases consist of two structural domains, F(1) containing the extramembraneous catalytic core and F(0) containing the membrane proton channel, linked together by a central stalk and a peripheral stalk. During catalysis, ATP synthesis in the catalytic domain of F(1) is coupled via a rotary mechanism of the central stalk subunits to proton translocation. Key component of the F(0) channel; it plays a direct role in translocation across the membrane. A homomeric c-ring of between 10-14 subunits forms the central stalk rotor element with the F(1) delta and epsilon subunits. In Synechococcus sp. (strain CC9902), this protein is ATP synthase subunit c.